Consider the following 252-residue polypeptide: Bridging integrator 3 homolog (252 aa).

In terms of domain architecture, BAR spans 8–231; that stretch reads GGPKKQIVPK…VDEVQLSDAE (224 aa). 3 coiled-coil regions span residues 17-57, 119-150, and 224-244; these read KTVE…MSKS, SLNMAVKRREQALQDYKRLQTKVEKYEEKDKT, and EVQLSDAEREQENEARLAELR.

It localises to the cytoplasm. Its subcellular location is the cytoskeleton. Functionally, involved in cytokinesis and septation where it has a role in the localization of F-actin. This is Bridging integrator 3 homolog (bin3) from Xenopus laevis (African clawed frog).